Reading from the N-terminus, the 323-residue chain is Mas-related G-protein coupled receptor member B4 (323 aa).

At 1–34 the chain is on the extracellular side; sequence MSPTTQAWSINNTVVKENYYTEILSCITTFNTLN. The N-linked (GlcNAc...) asparagine glycan is linked to N11. A helical transmembrane segment spans residues 35–55; it reads FLIVIISVVGMAGNATVLWLL. Over 56–63 the chain is Cytoplasmic; that stretch reads GFHMHRNA. A helical transmembrane segment spans residues 64–84; the sequence is FSVYVLNLAGADFLYLCAQTV. The Extracellular portion of the chain corresponds to 85–98; the sequence is YSLECVLQFDNSYF. A helical membrane pass occupies residues 99–119; sequence YFLLTILMFNYLAGFCMIAAI. The Cytoplasmic segment spans residues 120 to 147; that stretch reads STERCLSVTWPIWYHCQRPRHTSATVCA. Residues 148–168 form a helical membrane-spanning segment; sequence LFWAFSLLLSLLLGQGCGFLF. Topologically, residues 169–180 are extracellular; sequence SKFDYSFCRYCN. A helical transmembrane segment spans residues 181–201; it reads FIATAFLIVIFMVLFVSSLAL. The Cytoplasmic portion of the chain corresponds to 202–224; the sequence is LAKIICGSHRIPVTRFYVTIALT. A helical transmembrane segment spans residues 225-245; sequence VLVFIFFGLPIGICVFLLPWI. Residues 246-255 are Extracellular-facing; it reads HMMLSSFFYE. The helical transmembrane segment at 256–276 threads the bilayer; it reads MVTLLSCVNSCANPIIYFFVG. Topologically, residues 277–323 are cytoplasmic; the sequence is SIRHHRLQRQTLKLLLQRAMQDTPEEEGGERGPSQKSEDLEVVRCSS. The segment at 298–323 is disordered; the sequence is DTPEEEGGERGPSQKSEDLEVVRCSS. Residues 312–323 show a composition bias toward basic and acidic residues; that stretch reads KSEDLEVVRCSS.

This sequence belongs to the G-protein coupled receptor 1 family. Mas subfamily. In terms of tissue distribution, expressed strongly in newborn dorsal root ganglia, adult dorsal root ganglia and trigeminal ganlia.

It localises to the membrane. Its function is as follows. Orphan receptor. Probably involved in the function of nociceptive neurons. May regulate nociceptor function and/or development, including the sensation or modulation of pain. In Rattus norvegicus (Rat), this protein is Mas-related G-protein coupled receptor member B4 (Mrgprb4).